A 371-amino-acid chain; its full sequence is uncharacterized protein (371 aa).

Residues lysine 339–histidine 371 are disordered.

This is an uncharacterized protein from Escherichia coli (strain K12).